The sequence spans 370 residues: Histidinol-phosphate aminotransferase 1 (370 aa).

At lysine 222 the chain carries N6-(pyridoxal phosphate)lysine.

Belongs to the class-II pyridoxal-phosphate-dependent aminotransferase family. Histidinol-phosphate aminotransferase subfamily. As to quaternary structure, homodimer. Pyridoxal 5'-phosphate is required as a cofactor.

It catalyses the reaction L-histidinol phosphate + 2-oxoglutarate = 3-(imidazol-4-yl)-2-oxopropyl phosphate + L-glutamate. It functions in the pathway amino-acid biosynthesis; L-histidine biosynthesis; L-histidine from 5-phospho-alpha-D-ribose 1-diphosphate: step 7/9. The polypeptide is Histidinol-phosphate aminotransferase 1 (Bacillus thuringiensis subsp. konkukian (strain 97-27)).